The sequence spans 260 residues: MTSDALTIGRYTFTSRLFVGTGKYKDLDETRRALEASGAEVVTVALRRVNLKERGEGSMMSLLQQGRVTILPNTAGCYTVEDAVRTCRLARELGLSDLVKLEVIGDERTLFPDNEATLEAARILVKEGFTVLPYCMDDPIVCRKLEDIGCAAVMPLAAPIGSGLGIRNPYNLMIIRETAKVPVIVDAGVGTASDAAVAMELGCDGVLMNTAIAGARDPILMAQAMKDAVRAGRMAYLAGRMPKKLYATASSPEQGKIAAL.

The Schiff-base intermediate with DXP role is filled by K100. Residues G161, 187-188, and 209-210 each bind 1-deoxy-D-xylulose 5-phosphate; these read AG and NT.

It belongs to the ThiG family. Homotetramer. Forms heterodimers with either ThiH or ThiS.

The protein resides in the cytoplasm. It carries out the reaction [ThiS sulfur-carrier protein]-C-terminal-Gly-aminoethanethioate + 2-iminoacetate + 1-deoxy-D-xylulose 5-phosphate = [ThiS sulfur-carrier protein]-C-terminal Gly-Gly + 2-[(2R,5Z)-2-carboxy-4-methylthiazol-5(2H)-ylidene]ethyl phosphate + 2 H2O + H(+). Its pathway is cofactor biosynthesis; thiamine diphosphate biosynthesis. Its function is as follows. Catalyzes the rearrangement of 1-deoxy-D-xylulose 5-phosphate (DXP) to produce the thiazole phosphate moiety of thiamine. Sulfur is provided by the thiocarboxylate moiety of the carrier protein ThiS. In vitro, sulfur can be provided by H(2)S. This Sorangium cellulosum (strain So ce56) (Polyangium cellulosum (strain So ce56)) protein is Thiazole synthase.